Here is a 448-residue protein sequence, read N- to C-terminus: Potassium/proton antiporter CemA (448 aa).

4 consecutive transmembrane segments (helical) span residues 47-67 (IVFY…LSLL), 213-233 (LSSL…STLF), 314-334 (IISH…LFVA), and 395-415 (IISC…KYLI).

This sequence belongs to the CemA family.

It localises to the plastid membrane. The catalysed reaction is K(+)(in) + H(+)(out) = K(+)(out) + H(+)(in). Its function is as follows. May be involved in proton extrusion. In Aneura mirabilis (Parasitic liverwort), this protein is Potassium/proton antiporter CemA.